The chain runs to 203 residues: DNA-directed RNA polymerase III subunit rpc8 (203 aa).

Belongs to the eukaryotic RPB7/RPC8 RNA polymerase subunit family. In terms of assembly, component of the RNA polymerase III (Pol III) complex consisting of 17 subunits. Rpc25/rpc8 and rpc17/rpc9 form a Pol III subcomplex.

Its subcellular location is the cytoplasm. It is found in the nucleus. Functionally, DNA-dependent RNA polymerase catalyzes the transcription of DNA into RNA using the four ribonucleoside triphosphates as substrates. Specific peripheric component of RNA polymerase III which synthesizes small RNAs, such as 5S rRNA and tRNA. This chain is DNA-directed RNA polymerase III subunit rpc8 (rpc25), found in Schizosaccharomyces pombe (strain 972 / ATCC 24843) (Fission yeast).